The following is a 484-amino-acid chain: GRIP domain-containing protein RUD3 (484 aa).

A compositionally biased stretch (basic residues) spans 1-15 (MGKNKKKTGKKAKSH). Positions 1–75 (MGKNKKKTGK…GVDKQKVNDG (75 aa)) are disordered. The segment covering 16 to 30 (PHVEDVDETVNKPEE) has biased composition (basic and acidic residues). Residues serine 55 and serine 64 each carry the phosphoserine modification. Residues 61-72 (KDLSEGVDKQKV) show a composition bias toward basic and acidic residues. Positions 84-383 (LEDKKAGDEM…LQIGKLRHEA (300 aa)) form a coiled coil. The GRIP domain maps to 401–452 (SDSESVDKELISNLLISFVSIPRADPRKFEVLELLSNFLNWDEDKKQQAGLI). A Phosphoserine modification is found at serine 468.

Its subcellular location is the golgi apparatus lumen. Functionally, involved in the structural organization of the cis-Golgi and in vesicle targeting/fusion stages of ER to Golgi transport. The chain is GRIP domain-containing protein RUD3 (RUD3) from Saccharomyces cerevisiae (strain ATCC 204508 / S288c) (Baker's yeast).